The sequence spans 93 residues: Acylphosphatase (93 aa).

An Acylphosphatase-like domain is found at 6–93 (RAHVFISGRV…GEERGFSIIW (88 aa)). Catalysis depends on residues Arg21 and Asn39.

The protein belongs to the acylphosphatase family.

The catalysed reaction is an acyl phosphate + H2O = a carboxylate + phosphate + H(+). The chain is Acylphosphatase (acyP) from Roseiflexus sp. (strain RS-1).